A 307-amino-acid chain; its full sequence is Retron Ec86 putative ribosyltransferase/DNA-binding protein (307 aa).

In terms of biological role, possible ribosyltransferase/DNA-binding component of antiviral defense system retron Ec86, composed of a non-coding RNA (ncRNA), a ribosyltransferase/DNA-binding protein and a reverse transcriptase (RT). Expression of the 3-gene retron confers protection against bacteriophages T5. At multiplicity of infection (MOI) of 0.02 cultures grow normally when infected with T5 without collapsing, at MOI 2 cultures enter growth stasis. The protein is Retron Ec86 putative ribosyltransferase/DNA-binding protein of Escherichia coli.